We begin with the raw amino-acid sequence, 178 residues long: MSAAVLEQSVLGSRRLSNFLVAAAVSVGGVGFLLASLSSYLGQDLLPFGHPAALIFVPQGLVMGLYSIAAALLASYLWYVIAVDVGSGSNRFDKESGVVVISRRGFRRPVCVEFPLKDVKAVKVEVRDGFNARRRVSLRLQGRRDLPLTRVGEPLPLAQLEQEGAELARFLGVNLEGL.

2 consecutive transmembrane segments (helical) span residues 19-39 (FLVAAAVSVGGVGFLLASLSS) and 61-81 (LVMGLYSIAAALLASYLWYVI).

Belongs to the Ycf4 family.

The protein resides in the cellular thylakoid membrane. Its function is as follows. Seems to be required for the assembly of the photosystem I complex. The chain is Photosystem I assembly protein Ycf4 from Synechococcus sp. (strain CC9902).